Consider the following 327-residue polypeptide: Malate dehydrogenase (327 aa).

Residue 12 to 18 (GAAGQIG) coordinates NAD(+). Substrate-binding residues include Arg93 and Arg99. Residues Asn106, Gln113, and 130-132 (VGN) each bind NAD(+). Positions 132 and 163 each coordinate substrate. His188 (proton acceptor) is an active-site residue.

It belongs to the LDH/MDH superfamily. MDH type 2 family.

It carries out the reaction (S)-malate + NAD(+) = oxaloacetate + NADH + H(+). Catalyzes the reversible oxidation of malate to oxaloacetate. This chain is Malate dehydrogenase, found in Cupriavidus metallidurans (strain ATCC 43123 / DSM 2839 / NBRC 102507 / CH34) (Ralstonia metallidurans).